Reading from the N-terminus, the 291-residue chain is 4-hydroxy-tetrahydrodipicolinate synthase (291 aa).

Pyruvate is bound at residue Thr44. Catalysis depends on Tyr132, which acts as the Proton donor/acceptor. Catalysis depends on Lys160, which acts as the Schiff-base intermediate with substrate. Residue Ile202 participates in pyruvate binding.

It belongs to the DapA family. Homotetramer; dimer of dimers.

The protein resides in the cytoplasm. It catalyses the reaction L-aspartate 4-semialdehyde + pyruvate = (2S,4S)-4-hydroxy-2,3,4,5-tetrahydrodipicolinate + H2O + H(+). The protein operates within amino-acid biosynthesis; L-lysine biosynthesis via DAP pathway; (S)-tetrahydrodipicolinate from L-aspartate: step 3/4. Catalyzes the condensation of (S)-aspartate-beta-semialdehyde [(S)-ASA] and pyruvate to 4-hydroxy-tetrahydrodipicolinate (HTPA). In Rhizorhabdus wittichii (strain DSM 6014 / CCUG 31198 / JCM 15750 / NBRC 105917 / EY 4224 / RW1) (Sphingomonas wittichii), this protein is 4-hydroxy-tetrahydrodipicolinate synthase.